Reading from the N-terminus, the 605-residue chain is E3 ubiquitin-protein ligase synoviolin A (605 aa).

A helical transmembrane segment spans residues methionine 1–leucine 19. The Lumenal portion of the chain corresponds to lysine 20–proline 35. The chain crosses the membrane as a helical span at residues serine 36–glycine 56. The Cytoplasmic portion of the chain corresponds to lysine 57–aspartate 92. Residues phenylalanine 93–leucine 113 form a helical membrane-spanning segment. Over alanine 114–tryptophan 129 the chain is Lumenal. The helical transmembrane segment at leucine 130 to valine 150 threads the bilayer. The Cytoplasmic portion of the chain corresponds to serine 151 to serine 163. Residues valine 164 to isoleucine 184 form a helical membrane-spanning segment. Residues lysine 185–valine 218 lie on the Lumenal side of the membrane. A helical membrane pass occupies residues leucine 219–isoleucine 239. Positions lysine 230–arginine 264 are interaction with p53/TP53. Topologically, residues arginine 240–glutamine 605 are cytoplasmic. The Zn(2+) site is built by cysteine 285, cysteine 288, cysteine 301, histidine 303, histidine 306, cysteine 309, cysteine 320, and cysteine 323. Residues cysteine 285–arginine 324 form an RING-type; atypical zinc finger. Over residues threonine 334–threonine 355 the composition is skewed to low complexity. The tract at residues threonine 334–proline 433 is disordered. The span at proline 356–glycine 391 shows a compositional bias: pro residues. Over residues proline 403–glycine 414 the composition is skewed to low complexity. Positions glutamate 415 to glutamine 424 are enriched in polar residues. Positions glutamate 465 to methionine 496 form a coiled coil. Positions glutamine 513–glutamine 605 are disordered. Residues isoleucine 516–serine 539 show a composition bias toward low complexity. Positions aspartate 546–glutamate 555 are enriched in polar residues. The segment covering serine 556–threonine 579 has biased composition (low complexity).

Belongs to the HRD1 family. In terms of assembly, homodimer.

The protein localises to the endoplasmic reticulum membrane. The enzyme catalyses S-ubiquitinyl-[E2 ubiquitin-conjugating enzyme]-L-cysteine + [acceptor protein]-L-lysine = [E2 ubiquitin-conjugating enzyme]-L-cysteine + N(6)-ubiquitinyl-[acceptor protein]-L-lysine.. It functions in the pathway protein modification; protein ubiquitination. E3 ubiquitin-protein ligase which accepts ubiquitin specifically from endoplasmic reticulum-associated UBC7 E2 ligase and transfers it to substrates, promoting their degradation. Component of the endoplasmic reticulum quality control (ERQC) system also called ER-associated degradation (ERAD) involved in ubiquitin-dependent degradation of misfolded endoplasmic reticulum proteins. Also promotes the degradation of normal but naturally short-lived proteins. Protects cells from ER stress-induced apoptosis. Sequesters p53 in the cytoplasm and promotes its degradation, thereby negatively regulating its biological function in transcription, cell cycle regulation and apoptosis. This chain is E3 ubiquitin-protein ligase synoviolin A (syvn1-a), found in Xenopus laevis (African clawed frog).